The primary structure comprises 220 residues: MAGDPLLPALHTGVERLGLTLPEGAAEALITYLRLLERWNRAYNLSAIRDPGEMLHRHLLDSLSILPYVEGDSLLDVGSGAGLPGIPLALARPGLTVTLLDSNGKKQRFTRQVALELGLHRLRFAQARLADYRPGQPFDTVVSRAFAALSGYVPEALRLCRAGGRVLAMKGRLPEEELAALPRSLRGCTLTALDVPGVAGQRHLLTWTAPAVSATEEANP.

S-adenosyl-L-methionine contacts are provided by G78, L83, and R144.

Belongs to the methyltransferase superfamily. RNA methyltransferase RsmG family.

It localises to the cytoplasm. The catalysed reaction is guanosine(527) in 16S rRNA + S-adenosyl-L-methionine = N(7)-methylguanosine(527) in 16S rRNA + S-adenosyl-L-homocysteine. Its function is as follows. Specifically methylates the N7 position of guanine in position 527 of 16S rRNA. This Alkalilimnicola ehrlichii (strain ATCC BAA-1101 / DSM 17681 / MLHE-1) protein is Ribosomal RNA small subunit methyltransferase G.